The chain runs to 227 residues: Cytochrome c oxidase subunit 2 (227 aa).

The Mitochondrial intermembrane segment spans residues 1–14 (MAYPVQLGFQDAAS). The chain crosses the membrane as a helical span at residues 15-45 (PIMEELLYFHDHTLMIMFLISSLVLYIISLM). Topologically, residues 46–59 (LTTELIHTSTMDAQ) are mitochondrial matrix. Residues 60–87 (EVETVWTILPAVILILIALPSLRILYMM) traverse the membrane as a helical segment. Over 88–227 (DEISTPSLTL…HFEEWLLSML (140 aa)) the chain is Mitochondrial intermembrane. Residues H161, C196, E198, C200, H204, and M207 each coordinate Cu cation. E198 contacts Mg(2+).

Belongs to the cytochrome c oxidase subunit 2 family. In terms of assembly, component of the cytochrome c oxidase (complex IV, CIV), a multisubunit enzyme composed of 14 subunits. The complex is composed of a catalytic core of 3 subunits MT-CO1, MT-CO2 and MT-CO3, encoded in the mitochondrial DNA, and 11 supernumerary subunits COX4I, COX5A, COX5B, COX6A, COX6B, COX6C, COX7A, COX7B, COX7C, COX8 and NDUFA4, which are encoded in the nuclear genome. The complex exists as a monomer or a dimer and forms supercomplexes (SCs) in the inner mitochondrial membrane with NADH-ubiquinone oxidoreductase (complex I, CI) and ubiquinol-cytochrome c oxidoreductase (cytochrome b-c1 complex, complex III, CIII), resulting in different assemblies (supercomplex SCI(1)III(2)IV(1) and megacomplex MCI(2)III(2)IV(2)). Found in a complex with TMEM177, COA6, COX18, COX20, SCO1 and SCO2. Interacts with TMEM177 in a COX20-dependent manner. Interacts with COX20. Interacts with COX16. Requires Cu cation as cofactor.

The protein resides in the mitochondrion inner membrane. It catalyses the reaction 4 Fe(II)-[cytochrome c] + O2 + 8 H(+)(in) = 4 Fe(III)-[cytochrome c] + 2 H2O + 4 H(+)(out). Functionally, component of the cytochrome c oxidase, the last enzyme in the mitochondrial electron transport chain which drives oxidative phosphorylation. The respiratory chain contains 3 multisubunit complexes succinate dehydrogenase (complex II, CII), ubiquinol-cytochrome c oxidoreductase (cytochrome b-c1 complex, complex III, CIII) and cytochrome c oxidase (complex IV, CIV), that cooperate to transfer electrons derived from NADH and succinate to molecular oxygen, creating an electrochemical gradient over the inner membrane that drives transmembrane transport and the ATP synthase. Cytochrome c oxidase is the component of the respiratory chain that catalyzes the reduction of oxygen to water. Electrons originating from reduced cytochrome c in the intermembrane space (IMS) are transferred via the dinuclear copper A center (CU(A)) of subunit 2 and heme A of subunit 1 to the active site in subunit 1, a binuclear center (BNC) formed by heme A3 and copper B (CU(B)). The BNC reduces molecular oxygen to 2 water molecules using 4 electrons from cytochrome c in the IMS and 4 protons from the mitochondrial matrix. This is Cytochrome c oxidase subunit 2 (MT-CO2) from Eulemur macaco (Black lemur).